A 207-amino-acid polypeptide reads, in one-letter code: Claudin-11 (207 aa).

A topological domain (cytoplasmic) is located at residue M1. A helical transmembrane segment spans residues 2–22 (VATCLQVVGFVTSFVGWIGII). Topologically, residues 23-82 (VTTSTNDWVVTCGYTIPTCRKLDELGSKGLWADCVMATGLYHCKPLVDILILPGYVQACR) are extracellular. A helical transmembrane segment spans residues 83 to 103 (ALMIAASVLGLPAILLLLTVL). Topologically, residues 104–122 (PCIRMGHEPGVAKYRRAQL) are cytoplasmic. The helical transmembrane segment at 123 to 143 (AGVMLVLVALCAMVATIWFPV) threads the bilayer. Topologically, residues 144–157 (CAHRETTIVSFGYS) are extracellular. A helical transmembrane segment spans residues 158–178 (LYAGWIGAVLCLVGGCVIVCC). The Cytoplasmic segment spans residues 179–207 (AGDAQAFGENRFYYSSGSSSPTHAKSAHV). Phosphoserine is present on residues S193, S194, S197, and S198.

The protein belongs to the claudin family. Interacts with tetraspanin-3/TSPAN3. Interacts with OCLN.

The protein resides in the cell junction. The protein localises to the tight junction. Its subcellular location is the cell membrane. Functionally, plays a major role in tight junction-specific obliteration of the intercellular space, through calcium-independent cell-adhesion activity. This Bos taurus (Bovine) protein is Claudin-11 (CLDN11).